A 213-amino-acid chain; its full sequence is Probable GTP-binding protein EngB (213 aa).

Residues 30 to 204 enclose the EngB-type G domain; the sequence is SVQSIAFMGR…REFILETLGI (175 aa). GTP-binding positions include 38 to 45, 65 to 69, 83 to 86, 150 to 153, and 183 to 185; these read GRSNSGKS, GKTKL, DLPG, TKID, and ISA. Residues S45 and T67 each contribute to the Mg(2+) site.

It belongs to the TRAFAC class TrmE-Era-EngA-EngB-Septin-like GTPase superfamily. EngB GTPase family. It depends on Mg(2+) as a cofactor.

Functionally, necessary for normal cell division and for the maintenance of normal septation. The chain is Probable GTP-binding protein EngB from Leptospira biflexa serovar Patoc (strain Patoc 1 / Ames).